A 377-amino-acid polypeptide reads, in one-letter code: MAVNVNTNVSAMTAQRYLNGASNAQQTSMERLSSGFKINSAKDDAAGLQISNRLNVQSRGLDVAVRNANDGISIAQTAEGAMNETTNILQRMRDLSLQSANGSNSKADRVAIQEEVTALNDELNRIAETTSFGGNKLLNGTFETKSFQIGADNGEAVMLSLNNMRSDNAMMGGTSYQAANGKDKDWSVQAGSNDLQITLKDTSGTDQTINISAKEGDDIEELATYINGQTDMVKASVDDEGKLQVFAGSNKVEGPVTFAGGLAGELGMQAGQAVTVDVIDVTSVGGAQESVAIVDAALQFVDSHRAQLGAFQNRFSHAISNLDNINENVSASKSRIKDTDFAKETTALTKSQILSQASSSVLAQAKQAPQAALSLLG.

A coiled-coil region spans residues 104–128 (NSKADRVAIQEEVTALNDELNRIAE).

It belongs to the bacterial flagellin family. In terms of assembly, heteromer of multiple flagellin subunits including FlaA, FlaB, FlaC, FlaD and possibly FlaE.

It is found in the secreted. It localises to the bacterial flagellum. Its function is as follows. Flagellin is the subunit protein which polymerizes to form the filaments of bacterial flagella. FlaD is not essential for flagellar synthesis and motility. May have a role in virulence unrelated to motility. This chain is Flagellin D (flaD), found in Vibrio anguillarum (Listonella anguillarum).